A 3313-amino-acid chain; its full sequence is MSQRGKRGNQHHHQSHHPPPQQQQRKDVEPQPPPTKRRKGRPPNGATTAAAAIAAAAAAAAAAAAGTATGGDRVPVIPSSNSKNEVEQELDIGGGGSGLLGAASSSSSITKSKSTKLAKSSSKSKSQGASTSSSWQARSVADIKMSSIYNRSSTEAPAELYRKDLISAMKLPDSEPLANYEYLVVADQWKQEWEKGVQVPVNPDSLPEPCVYVLPEPIVSPAHDFKLPKNRYLRITKDEHYSPELHCLTNVVALAENTCAYDIDPIDEAWLRLYNSDRAQCGAFHINETQFERVIEELEVRCWEQIQVILKQEEGLGIEFDENVICDVCRSPDSEEANEMVFCDNCNICVHQACYGITAIPSGQWLCRTCSMGITPDCVLCPNKAGAMKSNKSGKHWAHVSCALWIPEVSIGCVDRMEPITKISSIPQSRWSLVCVLCRKRVGSCIQCSKHSMSKGKKENAGGASGGGSASVTSSMHKANKYATGTGDGANEGSSACGKTGEDQRRRKNHRKNDMTSEERNQARAQRLQEVEAEFDKHVNINDISCHLFDVDDDAIVAIYNYWKLKRKSRHNRELIPPKSEDVEMIARKQEQQDLENHKLVVHLRQDLERVRNLCYMVSRREKLSRSLFKLREQVFYKQLGVLDETRLDKQQQKQDDKQRPALDMDAVIYANDGPTLYDRFYSSAGGQTVPAQYQNLEYVLEQLMGKLQSGKQGRGRASQSPNKRKQVAKASPTKKLNNGAITSRTSSPEKPAAMGKVPSTSTSTATATTAAKVRGAPPGKPLAGRRASKSGAATGTSTHNKTQSQSQSHSHIRSSASSHTSSGSSSSGDSSSPNGTSSSDSSSASDSGSESGSSSAASGISRRKSTTGSPLKKQSYARSVEQRQKQRQRRQSEAAAGASAASPNSRSATSSSEDEDEQQRRRQEPERERDGRGRGAIYNKTVPNRTQPTKSKQSTQADAGSGAGTGAAVETGAKRKLSTNTRGLAQMHKDAEESLSSDESEELLPLKNERQREAALSSGLAASGPTTGGRKMGQHIYSDSESSSSSNEKEQEEITAVESNVSDSQNQQTIRTKAAMKEFVPGTAATTTQSASSATAAASKFTKSTKEAKEGASSCKANSNAKLPYPADLLVVPQRQAAKKASENMRSTNLAATLQPDAADRMREPESHPATTIAKNKLKDSGSKQATEADKFGGGDKVRSKEQSKSTAKSAGEAIVERGKRGRPPKVPREPPAPSTSSTEKEKPPPPAEAKSTAPAAKPTAAKTSFAVSYVPQRQAAKKAAEQLKSSKPLQDTTFSTANESAEKEPAATTATTTGMTTLGVATSSPAKPSRRTSLKEAPNTPKESSANRRKSKEEAAAAAKTTTPIKRRIAAPNLSSSSSGDSDSSSSSSSSGSSSSSGSGSDSDSDSQASDAEKPRQAGKEPAPSAAAPCSTVSSNVPKRSPRKSVDKPAASAAAAAAAAATPAPPPPPQPLTARTRQNSTNKSPKRVPQKSVATVDIQDDAQSAPKTHSHRRQSSPDEGSKQVQSEQVTKRATRGSKSRPPSPVVKSSPEKQTARRKSRADESPKKIPNLEHEINQRKAASGKATSALDKMLDKKQQQINNSTPASPPRKSLTPTPTPPPARSPLPEKLQREPEPVVEPEVETEIEPATEAGELPMDIDEELTTAPTHTQLSANASKLADIIDDERPPAAPLPASPTPTPTSNDELSDAGSDLSERCRSRWRSRRRRRRRSHEPDEEHTHHTQHLLNEMEMARELEEERKNELLANASKYSASTSSPAVTVIPPDPPEIIELDSNSANSGGDQQQQQQQQPLPQQLMVHSPSSEVASTIQQQQQPPPSHQTLIDQLPVEHMPIVDTILEMEDSKFANNFASSLASVLNPPNPGQMSLLGSSLDRGEQISEEDSIQATRNLLEKLRKTKRKAQDDCCSKEAVDLLPPTPAIPSVFPFHNAADPEDIIHAQKEQQQQQQQQQQQQQQQQQQQQSCLYGNSSGPNSVASLTIKDSPMTANSGSYANSLTNTPNATPTNATMGNNLGASGGYQVNFGNSQQAPPLSCFLEKSPHQKGGCPLSNNGGAVPGATPDFVDLAAAAVKNSLGSYQAGAPVTAQSGAGSNSNKLSDYDENTRMQSPFGRMQRWNENDLIAARRSSSPSSVSESNDQPPATVAARNISQLEGCKTFFNSYASGNGGGGSAVNPTAPYSHAPLVNGIDGMSMFSNAAAPQQQTTPTHQQQQQQQQQQQQQRTPNSQFNGGIYPQLAVMMHTQSTTTESTPSLYGNGGVGVVPGVGVGVGAVPTTLPLAPPPQAPQYSGTPYTTPSLGMLPVQQQPVVPPVQVSTTPNHQFALASPVDGKIPAYPAHPAHPAHPAHPAHPAHPAQLLSSCVEAAVVSMMPPTTPVAVAAKESPNKRSSANSGSAAKKQPNKSPQLPQGKSPGKSPRQPVQPQPPTPPAPAPAVALPPSKYDPLTHTIQGKPRQRAPRGSGGSGAPGRGRGRGRGRGRGAGAASGMALPLPPPMSDYGSNTHIVNNLVGTPFEFNNYDDDITGPGVENLQSLRDRRRSFELRTTRGQPKPTPAPTAATTTNPLLHPVLPGPVDMRTYNLGFEAPHSTASQEAYQNNLLGAFDSGTADQTLSEFDEEDERQFQSALRATGTGTSPSKHPAVSAAPVAPAPAPAANSQPPANLLLHSTEANQMAPSVAATGGATHLMEGSLVEASLEATSEEVSIDSDTTIMNSKTSICDARNQLKLKIKSPLAYSGEHYGAMANSLSSSLSLSSSTLVQSSSAVQTTVSTSTVVSASSVGSGNSRRMRKKELLSLYVVQKDNLNDDSSCGLPAASDNLPLGPDFLRKSEEEEDVSTGNGNGSKRFKKNSSSRELRALDANSVLVEDQQLAGASGGGAGTASGDGRRRSACSSGSNNDNNGKTGAATSAGKRRGRSKTLESSEDDHQTPKLKIKIRGLSGSEAVASAGISNAGDSKSYSYEMTRRACPPKKRLTSNYSTPTLEEIKRDSMNYRKKVMQDFDKGEENNKQDSSGLPLDGEALMPQPPSKRPKSSKPKKDKKEKKRQKQKQLILNSSSATTTMTTTLIENTASASPGDKPKLILRINKRKTETSTKITCLEQPPVNEAPLRLKIARNLSGGGYIIGAKAEKKEDPPPDPPPDPNQPNVSPANELPLMAPLGETSPQGLLLNSFTPHSQNANASPALLGKDSGTPSPPCLVIDSSKSADVHDSTSLPESGVAAMGVPASLVGATTPLCVNVGNYENSNNSLPSASGTGSASSNSCNSNSNNNNNNGSGGGAASGGGSLLPLKKDCEVR.

Over residues 1-16 (MSQRGKRGNQHHHQSH) the composition is skewed to basic residues. Residues 1–136 (MSQRGKRGNQ…QGASTSSSWQ (136 aa)) are disordered. Low complexity-rich tracts occupy residues 42–71 (PPNG…ATGG) and 100–134 (LGAA…TSSS). A PHD-type 1 zinc finger spans residues 323–373 (NVICDVCRSPDSEEANEMVFCDNCNICVHQACYGITAIPSGQWLCRTCSMG). The C2HC pre-PHD-type zinc finger occupies 375-409 (TPDCVLCPNKAGAMKSNKSGKHWAHVSCALWIPEV). The PHD-type 2; degenerate zinc finger occupies 433–487 (LVCVLCRKRVGSCIQCSKHSMSKGKKENAGGASGGGSASVTSSMHKANKYATGTG). 17 disordered regions span residues 453 to 526 (MSKG…ARAQ), 708 to 1076 (LQSG…TKAA), 1107 to 1842 (KEAK…PPSH), 1961 to 2033 (AQKE…TMGN), 2104 to 2136 (PVTA…RMQR), 2145 to 2164 (ARRS…PPAT), 2219 to 2252 (AAPQ…FNGG), 2353 to 2374 (PAYP…PAHP), 2398 to 2514 (VAAK…PPPM), 2563 to 2587 (TTRG…LHPV), 2647 to 2679 (ATGT…QPPA), 2827 to 2871 (SCGL…SSSR), 2888 to 2954 (LAGA…IKIR), 2978 to 2998 (YEMT…YSTP), 3017 to 3077 (DFDK…SATT), 3144 to 3233 (KAEK…SLPE), and 3259 to 3313 (YENS…CEVR). Basic and acidic residues predominate over residues 512-526 (KNDMTSEERNQARAQ). The segment covering 735-749 (KKLNNGAITSRTSSP) has biased composition (polar residues). Residues 760 to 772 (STSTSTATATTAA) are compositionally biased toward low complexity. Positions 792-802 (GAATGTSTHNK) are enriched in polar residues. Composition is skewed to low complexity over residues 803-861 (TQSQ…ASGI) and 894-912 (EAAA…ATSS). The span at 919–934 (QQRRRQEPERERDGRG) shows a compositional bias: basic and acidic residues. Polar residues predominate over residues 942-955 (TVPNRTQPTKSKQS). Over residues 956–972 (TQADAGSGAGTGAAVET) the composition is skewed to low complexity. The span at 994–1003 (ESLSSDESEE) shows a compositional bias: acidic residues. Residues 1015-1025 (AALSSGLAASG) are compositionally biased toward low complexity. Residues 1058–1072 (VESNVSDSQNQQTIR) are compositionally biased toward polar residues. Composition is skewed to basic and acidic residues over residues 1159–1168 (AADRMREPES) and 1178–1205 (KLKD…KEQS). Over residues 1250-1266 (EAKSTAPAAKPTAAKTS) the composition is skewed to low complexity. Polar residues predominate over residues 1285–1301 (LKSSKPLQDTTFSTANE). Composition is skewed to low complexity over residues 1308–1324 (AATT…GVAT), 1377–1404 (SSSS…SGSD), and 1451–1464 (PAAS…AAAT). Over residues 1475–1485 (TARTRQNSTNK) the composition is skewed to polar residues. Basic and acidic residues predominate over residues 1551 to 1579 (SPEKQTARRKSRADESPKKIPNLEHEINQ). The segment covering 1638–1650 (PVVEPEVETEIEP) has biased composition (acidic residues). Residues 1667–1678 (TAPTHTQLSANA) show a composition bias toward polar residues. Over residues 1691–1702 (PAAPLPASPTPT) the composition is skewed to pro residues. The span at 1722 to 1734 (SRWRSRRRRRRRS) shows a compositional bias: basic residues. Residues 1744 to 1773 (HTQHLLNEMEMARELEEERKNELLANASKY) adopt a coiled-coil conformation. Over residues 1753–1765 (EMARELEEERKNE) the composition is skewed to basic and acidic residues. 2 stretches are compositionally biased toward polar residues: residues 1771-1781 (SKYSASTSSPA) and 1796-1805 (DSNSANSGGD). A compositionally biased stretch (low complexity) spans 1806–1819 (QQQQQQQQPLPQQL). The span at 1823–1832 (SPSSEVASTI) shows a compositional bias: polar residues. A compositionally biased stretch (low complexity) spans 1965–1984 (QQQQQQQQQQQQQQQQQQQQ). 2 stretches are compositionally biased toward polar residues: residues 1985-1999 (SCLY…SVAS) and 2007-2018 (MTANSGSYANSL). The segment covering 2019-2033 (TNTPNATPTNATMGN) has biased composition (low complexity). Over residues 2106–2118 (TAQSGAGSNSNKL) the composition is skewed to polar residues. Low complexity-rich tracts occupy residues 2148-2157 (SSSPSSVSES) and 2222-2242 (QQQT…QQQQ). Over residues 2439 to 2451 (PVQPQPPTPPAPA) the composition is skewed to pro residues. Gly residues predominate over residues 2479-2488 (GSGGSGAPGR). The segment covering 2658-2679 (PAVSAAPVAPAPAPAANSQPPA) has biased composition (low complexity). A compositionally biased stretch (gly residues) spans 2891 to 2900 (ASGGGAGTAS). Polar residues predominate over residues 2909 to 2924 (CSSGSNNDNNGKTGAA). The segment covering 2935–2946 (KTLESSEDDHQT) has biased composition (basic and acidic residues). Residues 3017–3026 (DFDKGEENNK) are compositionally biased toward basic and acidic residues. The segment covering 3046–3065 (KRPKSSKPKKDKKEKKRQKQ) has biased composition (basic residues). The segment covering 3179–3198 (TSPQGLLLNSFTPHSQNANA) has biased composition (polar residues). Residues 3268-3290 (SASGTGSASSNSCNSNSNNNNNN) show a composition bias toward low complexity. Positions 3291 to 3302 (GSGGGAASGGGS) are enriched in gly residues.

The protein belongs to the JADE family.

It localises to the nucleus. In terms of biological role, may function as a negative regulator of the EGFR/Ras/MAPK signaling pathway during eye development. This chain is PHD finger protein rhinoceros (rno), found in Drosophila pseudoobscura pseudoobscura (Fruit fly).